The primary structure comprises 256 residues: MTLPSSQFPDLRDRGVLVTGGGSGIGAALVEAFARQGARVAFVDIAAESSLALCEKVAAQTGQAPHFIQADLRNVEAVRAAADEAVAKLGSVRVLVNNAARDDRQALEAVTEESWDESLSVNLRHLFFMCQAVAPHMQRQGGGSIVNFSSIAFLLNMPEIPAYSTAKAGIIGLTKSLAGKLGPDNIRVNAILPGMIVTERQRRLWLTEESIARMQERQCLKRMLVADDLVGPCLFLASDSSAAMTAQAMIIDGGVF.

NAD(+)-binding positions include 20–23, 71–72, and asparagine 98; these read GGGS and DL. Serine 150 is a binding site for substrate. The active-site Proton acceptor is the tyrosine 163. NAD(+) contacts are provided by residues 163–167 and isoleucine 196; that span reads YSTAK.

The protein belongs to the short-chain dehydrogenases/reductases (SDR) family.

Involved in the degradation of galactose via the DeLey-Doudoroff pathway. Catalyzes the oxidation of galactose in the presence of NAD(+). Uses NAD(+) as a hydrogen acceptor more efficiently than NADP(+). The sequence is that of Probable galactose dehydrogenase GalD (galD) from Rhizobium meliloti (strain 1021) (Ensifer meliloti).